Here is a 145-residue protein sequence, read N- to C-terminus: 3-dehydroquinate dehydratase (145 aa).

Tyr-22 acts as the Proton acceptor in catalysis. Substrate contacts are provided by Asn-73, His-79, and Asp-86. His-99 serves as the catalytic Proton donor. Substrate contacts are provided by residues 100–101 (LS) and Arg-110.

It belongs to the type-II 3-dehydroquinase family. Homododecamer.

The catalysed reaction is 3-dehydroquinate = 3-dehydroshikimate + H2O. It functions in the pathway metabolic intermediate biosynthesis; chorismate biosynthesis; chorismate from D-erythrose 4-phosphate and phosphoenolpyruvate: step 3/7. Its function is as follows. Catalyzes a trans-dehydration via an enolate intermediate. This chain is 3-dehydroquinate dehydratase, found in Prochlorococcus marinus (strain NATL1A).